Reading from the N-terminus, the 438-residue chain is Enolase (438 aa).

Residue Gln-164 coordinates (2R)-2-phosphoglycerate. Residue Glu-206 is the Proton donor of the active site. Mg(2+) is bound by residues Asp-243, Glu-289, and Asp-316. Positions 341, 370, 371, and 392 each coordinate (2R)-2-phosphoglycerate. Lys-341 functions as the Proton acceptor in the catalytic mechanism.

It belongs to the enolase family. Mg(2+) serves as cofactor.

It is found in the cytoplasm. The protein resides in the secreted. The protein localises to the cell surface. It carries out the reaction (2R)-2-phosphoglycerate = phosphoenolpyruvate + H2O. It participates in carbohydrate degradation; glycolysis; pyruvate from D-glyceraldehyde 3-phosphate: step 4/5. In terms of biological role, catalyzes the reversible conversion of 2-phosphoglycerate (2-PG) into phosphoenolpyruvate (PEP). It is essential for the degradation of carbohydrates via glycolysis. The chain is Enolase from Borrelia garinii subsp. bavariensis (strain ATCC BAA-2496 / DSM 23469 / PBi) (Borreliella bavariensis).